A 335-amino-acid polypeptide reads, in one-letter code: Anthranilate phosphoribosyltransferase (335 aa).

Residues G79, G82–D83, T87, N89–T92, K107–S115, and A119 each bind 5-phospho-alpha-D-ribose 1-diphosphate. Position 79 (G79) interacts with anthranilate. Position 91 (S91) interacts with Mg(2+). N110 contributes to the anthranilate binding site. R165 provides a ligand contact to anthranilate. 2 residues coordinate Mg(2+): D224 and E225.

Belongs to the anthranilate phosphoribosyltransferase family. As to quaternary structure, homodimer. Mg(2+) serves as cofactor.

It catalyses the reaction N-(5-phospho-beta-D-ribosyl)anthranilate + diphosphate = 5-phospho-alpha-D-ribose 1-diphosphate + anthranilate. It participates in amino-acid biosynthesis; L-tryptophan biosynthesis; L-tryptophan from chorismate: step 2/5. Catalyzes the transfer of the phosphoribosyl group of 5-phosphorylribose-1-pyrophosphate (PRPP) to anthranilate to yield N-(5'-phosphoribosyl)-anthranilate (PRA). This Methanobrevibacter smithii (strain ATCC 35061 / DSM 861 / OCM 144 / PS) protein is Anthranilate phosphoribosyltransferase.